A 281-amino-acid chain; its full sequence is 4-diphosphocytidyl-2-C-methyl-D-erythritol kinase (281 aa).

The active site involves Lys-15. An ATP-binding site is contributed by 98-108 (PTGAGLGGGSS). Asp-140 is a catalytic residue.

This sequence belongs to the GHMP kinase family. IspE subfamily.

The catalysed reaction is 4-CDP-2-C-methyl-D-erythritol + ATP = 4-CDP-2-C-methyl-D-erythritol 2-phosphate + ADP + H(+). It participates in isoprenoid biosynthesis; isopentenyl diphosphate biosynthesis via DXP pathway; isopentenyl diphosphate from 1-deoxy-D-xylulose 5-phosphate: step 3/6. In terms of biological role, catalyzes the phosphorylation of the position 2 hydroxy group of 4-diphosphocytidyl-2C-methyl-D-erythritol. This Neisseria meningitidis serogroup A / serotype 4A (strain DSM 15465 / Z2491) protein is 4-diphosphocytidyl-2-C-methyl-D-erythritol kinase.